A 198-amino-acid chain; its full sequence is Adenylyl-sulfate kinase (198 aa).

Glycine 31–serine 38 contacts ATP. Serine 105 serves as the catalytic Phosphoserine intermediate.

It belongs to the APS kinase family.

The enzyme catalyses adenosine 5'-phosphosulfate + ATP = 3'-phosphoadenylyl sulfate + ADP + H(+). Its pathway is sulfur metabolism; hydrogen sulfide biosynthesis; sulfite from sulfate: step 2/3. Catalyzes the synthesis of activated sulfate. This Shewanella amazonensis (strain ATCC BAA-1098 / SB2B) protein is Adenylyl-sulfate kinase.